Here is a 461-residue protein sequence, read N- to C-terminus: Bifunctional protein GlmU (461 aa).

The pyrophosphorylase stretch occupies residues 1-243 (MNATVPSAAP…EDELRGINSR (243 aa)). Residues 24 to 27 (LAAG), Lys-38, Gln-86, 91 to 92 (GT), 112 to 114 (YGD), Gly-155, Glu-169, Asn-184, and Asn-241 contribute to the UDP-N-acetyl-alpha-D-glucosamine site. Asp-114 serves as a coordination point for Mg(2+). Position 241 (Asn-241) interacts with Mg(2+). Residues 244–264 (AELAEAEACVQRRLRAAALDG) form a linker region. The tract at residues 265-461 (GATLVAPETV…AALRRKKEQG (197 aa)) is N-acetyltransferase. Positions 330 and 348 each coordinate UDP-N-acetyl-alpha-D-glucosamine. Residue His-360 is the Proton acceptor of the active site. UDP-N-acetyl-alpha-D-glucosamine-binding residues include Tyr-363 and Asn-374. Residues Ala-377, 383–384 (NY), Ser-402, Ala-420, and Arg-437 each bind acetyl-CoA.

This sequence in the N-terminal section; belongs to the N-acetylglucosamine-1-phosphate uridyltransferase family. It in the C-terminal section; belongs to the transferase hexapeptide repeat family. In terms of assembly, homotrimer. Requires Mg(2+) as cofactor.

It localises to the cytoplasm. It carries out the reaction alpha-D-glucosamine 1-phosphate + acetyl-CoA = N-acetyl-alpha-D-glucosamine 1-phosphate + CoA + H(+). The enzyme catalyses N-acetyl-alpha-D-glucosamine 1-phosphate + UTP + H(+) = UDP-N-acetyl-alpha-D-glucosamine + diphosphate. It participates in nucleotide-sugar biosynthesis; UDP-N-acetyl-alpha-D-glucosamine biosynthesis; N-acetyl-alpha-D-glucosamine 1-phosphate from alpha-D-glucosamine 6-phosphate (route II): step 2/2. Its pathway is nucleotide-sugar biosynthesis; UDP-N-acetyl-alpha-D-glucosamine biosynthesis; UDP-N-acetyl-alpha-D-glucosamine from N-acetyl-alpha-D-glucosamine 1-phosphate: step 1/1. The protein operates within bacterial outer membrane biogenesis; LPS lipid A biosynthesis. Functionally, catalyzes the last two sequential reactions in the de novo biosynthetic pathway for UDP-N-acetylglucosamine (UDP-GlcNAc). The C-terminal domain catalyzes the transfer of acetyl group from acetyl coenzyme A to glucosamine-1-phosphate (GlcN-1-P) to produce N-acetylglucosamine-1-phosphate (GlcNAc-1-P), which is converted into UDP-GlcNAc by the transfer of uridine 5-monophosphate (from uridine 5-triphosphate), a reaction catalyzed by the N-terminal domain. This chain is Bifunctional protein GlmU, found in Gluconacetobacter diazotrophicus (strain ATCC 49037 / DSM 5601 / CCUG 37298 / CIP 103539 / LMG 7603 / PAl5).